The following is a 271-amino-acid chain: Probable protein VP2 (271 aa).

Disordered regions lie at residues 49–103, 124–146, and 203–271; these read GGPP…DAAA, QCSN…PIDT, and LQQR…RVST. Pro residues predominate over residues 50–61; sequence GPPPPGGPPPGT. Residues 87 to 99 are compositionally biased toward gly residues; it reads GEGGAAGPPGAGG. Residues 207-216 show a composition bias toward basic and acidic residues; that stretch reads QQRESSESPK. The segment covering 217–238 has biased composition (basic residues); sequence KAHIQRKKGRKPLQKSRRRRRQ. Residues 239 to 259 show a composition bias toward low complexity; it reads YSSSSDDSESSGSSSSSSNSS.

Post-translationally, phosphorylated at C-terminal serines.

The protein is Probable protein VP2 of Torque teno virus (isolate Human/Japan/SANBAN/1999) (TTV).